The chain runs to 231 residues: Ion-translocating oxidoreductase complex subunit E (231 aa).

6 helical membrane passes run 18–38 (ALVQ…ATNA), 39–59 (LGLG…ISTL), 63–83 (TPAE…VSAV), 86–106 (LINA…PLIV), 125–145 (ALSA…MFVL), and 182–202 (PFLL…MLAG).

Belongs to the NqrDE/RnfAE family. As to quaternary structure, the complex is composed of six subunits: RsxA, RsxB, RsxC, RsxD, RsxE and RsxG.

Its subcellular location is the cell inner membrane. In terms of biological role, part of a membrane-bound complex that couples electron transfer with translocation of ions across the membrane. Required to maintain the reduced state of SoxR. In Escherichia coli O1:K1 / APEC, this protein is Ion-translocating oxidoreductase complex subunit E.